An 84-amino-acid chain; its full sequence is U-actitoxin-Avd8e (84 aa).

Positions 1-22 (MASARTLVLLLIGAVLMCQVSA) are cleaved as a signal peptide. Positions 23 to 41 (DSELLNEILAAHMEEDMPE) are excised as a propeptide. The ShKT domain maps to 44–84 (CIDRYRSNICGSVIRPLDCTRRKSRMGRFARTNCKKLCGFC). 3 disulfides stabilise this stretch: C44-C84, C53-C77, and C62-C81.

Belongs to the sea anemone 8 toxin family.

The protein resides in the secreted. It localises to the nematocyst. The protein is U-actitoxin-Avd8e of Anemonia viridis (Snakelocks anemone).